We begin with the raw amino-acid sequence, 328 residues long: Lipoyl synthase (328 aa).

[4Fe-4S] cluster contacts are provided by Cys56, Cys61, Cys67, Cys82, Cys86, Cys89, and Ser293. In terms of domain architecture, Radical SAM core spans 68-282 (WEDREATFLI…ERVGAELGFS (215 aa)).

Belongs to the radical SAM superfamily. Lipoyl synthase family. [4Fe-4S] cluster is required as a cofactor.

Its subcellular location is the cytoplasm. It carries out the reaction [[Fe-S] cluster scaffold protein carrying a second [4Fe-4S](2+) cluster] + N(6)-octanoyl-L-lysyl-[protein] + 2 oxidized [2Fe-2S]-[ferredoxin] + 2 S-adenosyl-L-methionine + 4 H(+) = [[Fe-S] cluster scaffold protein] + N(6)-[(R)-dihydrolipoyl]-L-lysyl-[protein] + 4 Fe(3+) + 2 hydrogen sulfide + 2 5'-deoxyadenosine + 2 L-methionine + 2 reduced [2Fe-2S]-[ferredoxin]. The protein operates within protein modification; protein lipoylation via endogenous pathway; protein N(6)-(lipoyl)lysine from octanoyl-[acyl-carrier-protein]: step 2/2. Catalyzes the radical-mediated insertion of two sulfur atoms into the C-6 and C-8 positions of the octanoyl moiety bound to the lipoyl domains of lipoate-dependent enzymes, thereby converting the octanoylated domains into lipoylated derivatives. The chain is Lipoyl synthase from Frankia alni (strain DSM 45986 / CECT 9034 / ACN14a).